A 394-amino-acid chain; its full sequence is Tyrosine--tRNA ligase, cytoplasmic (394 aa).

S2 bears the N-acetylserine mark. Y43 provides a ligand contact to L-tyrosine. Residues 48–56 (PTGRPHCGY) carry the 'HIGH' region motif. L-tyrosine is bound by residues Y170, Q174, D177, and Q192. Residues 227–231 (KMSAS) carry the 'KMSKS' region motif. Position 235 is a phosphoserine (S235). The disordered stretch occupies residues 348–394 (QEASEKGYPVATPQKSKKAKKPKNKGTKYPGATKTNEIATKLEETKL). T359 carries the phosphothreonine modification. The Nuclear localization signal signature appears at 360-378 (PQKSKKAKKPKNKGTKYPG). Positions 362–373 (KSKKAKKPKNKG) are enriched in basic residues.

Belongs to the class-I aminoacyl-tRNA synthetase family. In terms of assembly, homodimer. Interacts with KNR4/SMI1.

The protein resides in the cytoplasm. It localises to the nucleus. It catalyses the reaction tRNA(Tyr) + L-tyrosine + ATP = L-tyrosyl-tRNA(Tyr) + AMP + diphosphate + H(+). Inhibited by N-ethylmaleimide and p-chloromercuribenzoate. In terms of biological role, catalyzes the attachment of L-tyrosine to tRNA(Tyr) in a two-step reaction: L-tyrosine is first activated by ATP to form Tyr-AMP and then transferred to the acceptor end of tRNA(Tyr). The specificity determinants on tRNA(Tyr) are the base pair C1-G72, the discriminator residue A73, and the three anticodon bases G34, U35 and A36. Also involved in nuclear tRNA export. Also attaches D-Tyr to tRNA(Tyr), this reaction is about 150-fold less efficient than attachment of L-Tyr. This is Tyrosine--tRNA ligase, cytoplasmic from Saccharomyces cerevisiae (strain ATCC 204508 / S288c) (Baker's yeast).